The following is a 310-amino-acid chain: Cysteine synthase (310 aa).

An N6-(pyridoxal phosphate)lysine modification is found at lysine 46. Pyridoxal 5'-phosphate-binding positions include asparagine 76, 180–184, and serine 268; that span reads GTGGT.

The protein belongs to the cysteine synthase/cystathionine beta-synthase family. In terms of assembly, homodimer. Pyridoxal 5'-phosphate serves as cofactor.

The catalysed reaction is O-acetyl-L-serine + hydrogen sulfide = L-cysteine + acetate. It participates in amino-acid biosynthesis; L-cysteine biosynthesis; L-cysteine from L-serine: step 2/2. This is Cysteine synthase (cysK) from Staphylococcus epidermidis (strain ATCC 35984 / DSM 28319 / BCRC 17069 / CCUG 31568 / BM 3577 / RP62A).